Here is a 223-residue protein sequence, read N- to C-terminus: Putative NAD(P)H nitroreductase SAB2397c (223 aa).

This sequence belongs to the nitroreductase family. FMN is required as a cofactor.

This chain is Putative NAD(P)H nitroreductase SAB2397c, found in Staphylococcus aureus (strain bovine RF122 / ET3-1).